A 120-amino-acid chain; its full sequence is Immunoglobulin kappa variable 2-30 (120 aa).

A signal peptide spans 1 to 20; that stretch reads MRLPAQLLGLLMLWVPGSSG. The interval 21–43 is framework-1; it reads DVVMTQSPLSLPVTLGQPASISC. The region spanning 21–120 is the Ig-like domain; sequence DVVMTQSPLS…YYCMQGTHWP (100 aa). Residues Cys-43 and Cys-113 are joined by a disulfide bond. Residues 44-59 are complementarity-determining-1; the sequence is RSSQSLVYSDGNTYLN. Positions 60–74 are framework-2; it reads WFQQRPGQSPRRLIY. Residues 75 to 81 form a complementarity-determining-2 region; sequence KVSNRDS. The segment at 82-113 is framework-3; that stretch reads GVPDRFSGSGSGTDFTLKISRVEAEDVGVYYC. The complementarity-determining-3 stretch occupies residues 114–120; the sequence is MQGTHWP.

Immunoglobulins are composed of two identical heavy chains and two identical light chains; disulfide-linked.

The protein localises to the secreted. The protein resides in the cell membrane. Functionally, v region of the variable domain of immunoglobulin light chains that participates in the antigen recognition. Immunoglobulins, also known as antibodies, are membrane-bound or secreted glycoproteins produced by B lymphocytes. In the recognition phase of humoral immunity, the membrane-bound immunoglobulins serve as receptors which, upon binding of a specific antigen, trigger the clonal expansion and differentiation of B lymphocytes into immunoglobulins-secreting plasma cells. Secreted immunoglobulins mediate the effector phase of humoral immunity, which results in the elimination of bound antigens. The antigen binding site is formed by the variable domain of one heavy chain, together with that of its associated light chain. Thus, each immunoglobulin has two antigen binding sites with remarkable affinity for a particular antigen. The variable domains are assembled by a process called V-(D)-J rearrangement and can then be subjected to somatic hypermutations which, after exposure to antigen and selection, allow affinity maturation for a particular antigen. This is Immunoglobulin kappa variable 2-30 from Homo sapiens (Human).